The sequence spans 97 residues: Co-chaperonin GroES (97 aa).

The protein belongs to the GroES chaperonin family. As to quaternary structure, heptamer of 7 subunits arranged in a ring. Interacts with the chaperonin GroEL.

Its subcellular location is the cytoplasm. Its function is as follows. Together with the chaperonin GroEL, plays an essential role in assisting protein folding. The GroEL-GroES system forms a nano-cage that allows encapsulation of the non-native substrate proteins and provides a physical environment optimized to promote and accelerate protein folding. GroES binds to the apical surface of the GroEL ring, thereby capping the opening of the GroEL channel. The chain is Co-chaperonin GroES from Pseudarthrobacter chlorophenolicus (strain ATCC 700700 / DSM 12829 / CIP 107037 / JCM 12360 / KCTC 9906 / NCIMB 13794 / A6) (Arthrobacter chlorophenolicus).